Reading from the N-terminus, the 321-residue chain is Gap junction delta-2 protein (321 aa).

The Cytoplasmic portion of the chain corresponds to 1 to 19 (MGEWTILERLLEAAVQQHS). Residues 20-42 (TMIGRILLTVVVIFRILIVAIVG) traverse the membrane as a helical segment. Over 43–75 (ETVYDDEQTMFVCNTLQPGCNQACYDRAFPISH) the chain is Extracellular. Residues 76–98 (IRYWVFQIIMVCTPSLCFITYSV) traverse the membrane as a helical segment. Residues 99 to 197 (HQSAKQRERR…KLRRQEGISR (99 aa)) lie on the Cytoplasmic side of the membrane. Residues 117 to 141 (DRDPPESMGGPGGTGGGGSGGGKRE) are disordered. Gly residues predominate over residues 125–137 (GGPGGTGGGGSGG). The chain crosses the membrane as a helical span at residues 198–220 (FYIIQVVFRNALEIGFLVGQYFL). The Extracellular portion of the chain corresponds to 221 to 252 (YGFSVPGLYECDRYPCIKEVECYVSRPTEKTV). A helical membrane pass occupies residues 253 to 275 (FLVFMFAVSGICVVLNLAELNHL). At 276 to 321 (GWRKIKLAVRGAQAKRKSVYEIRNKDLPRVSVPNFGRTQSSDSAYV) the chain is on the cytoplasmic side.

Belongs to the connexin family. Delta-type subfamily. In terms of assembly, a connexon is composed of a hexamer of connexins.

It localises to the cell membrane. It is found in the cell junction. The protein localises to the gap junction. Functionally, one gap junction consists of a cluster of closely packed pairs of transmembrane channels, the connexons, through which materials of low MW diffuse from one cell to a neighboring cell. The chain is Gap junction delta-2 protein (GJD2) from Bos taurus (Bovine).